A 204-amino-acid chain; its full sequence is Translation initiation factor IF-3 (204 aa).

The segment at Val169 to Ala204 is disordered.

This sequence belongs to the IF-3 family. As to quaternary structure, monomer.

It localises to the cytoplasm. IF-3 binds to the 30S ribosomal subunit and shifts the equilibrium between 70S ribosomes and their 50S and 30S subunits in favor of the free subunits, thus enhancing the availability of 30S subunits on which protein synthesis initiation begins. The protein is Translation initiation factor IF-3 of Deinococcus geothermalis (strain DSM 11300 / CIP 105573 / AG-3a).